A 146-amino-acid polypeptide reads, in one-letter code: MPCQDTVSLSIQHTSVYVQHSCCVSTSTSASTSATALGLGCLACGIVGVLVVAGGLCCLINGRCPSCRRLALRSRSWKSPPASLCTNQPLAFNLRDLTRSDIRCTSDPRSVELLSDVHSVVSHRERPPAYDSLDFEPTEYTPEAFQ.

A helical membrane pass occupies residues 36-56 (ALGLGCLACGIVGVLVVAGGL).

This sequence belongs to the aquareoviridae NS5 protein family.

It is found in the host membrane. The polypeptide is Non-structural protein 5 (S7) (Aquareovirus C (isolate Golden shiner/USA/GSRV/1977) (AQRV-C)).